A 235-amino-acid polypeptide reads, in one-letter code: Small ribosomal subunit protein uS2 (235 aa).

This sequence belongs to the universal ribosomal protein uS2 family.

This is Small ribosomal subunit protein uS2 from Geobacillus thermodenitrificans (strain NG80-2).